The sequence spans 577 residues: Beta-glucosidase 30 (577 aa).

Positions 1 to 23 (MAKGSWFFIILFIISMLENMINS) are cleaved as a signal peptide. Residues Gln-45, His-148, and 193 to 194 (NE) contribute to the a beta-D-glucoside site. The Proton donor role is filled by Glu-194. Cys-213 and Cys-221 are oxidised to a cystine. N-linked (GlcNAc...) asparagine glycosylation occurs at Asn-328. A beta-D-glucoside is bound at residue Tyr-338. N-linked (GlcNAc...) asparagine glycosylation occurs at Asn-368. A beta-D-glucoside is bound by residues Glu-410, Trp-460, 467–468 (EW), and Phe-476. The active-site Nucleophile is the Glu-410. Residues Asn-524 and Asn-544 are each glycosylated (N-linked (GlcNAc...) asparagine).

It belongs to the glycosyl hydrolase 1 family.

The enzyme catalyses Hydrolysis of terminal, non-reducing beta-D-glucosyl residues with release of beta-D-glucose.. The chain is Beta-glucosidase 30 from Arabidopsis thaliana (Mouse-ear cress).